Here is a 1938-residue protein sequence, read N- to C-terminus: Myosin-1 (1938 aa).

A Myosin N-terminal SH3-like domain is found at 33 to 82; it reads DAKTSVFVADPKESFVKATVQSREGGKVTAKTEAGATVTVKEDQCFPMNP. Thr64 and Thr69 each carry phosphothreonine. Residues 86–781 enclose the Myosin motor domain; it reads DKIEDMAMMT…LLGLLEEMRD (696 aa). Lys130 carries the post-translational modification N6,N6,N6-trimethyllysine. Residue 179 to 186 participates in ATP binding; sequence GESGAGKT. Tyr389 carries the phosphotyrosine modification. The residue at position 419 (Thr419) is a Phosphothreonine. Residue Tyr424 is modified to Phosphotyrosine. Ser625 is modified (phosphoserine). The actin-binding stretch occupies residues 658–680; the sequence is LNKLMTNLRSTHPHFVRCIIPNE. Position 756 is a pros-methylhistidine (His756). The interval 760–774 is actin-binding; the sequence is KFGHTKVFFKAGLLG. In terms of domain architecture, IQ spans 784 to 813; it reads LAQIITRTQARCRGFLARVEYQRMVERRES. A coiled-coil region spans residues 842 to 1938; the sequence is LLKSAETEKE…EVHTKIISEE (1097 aa). Residues Ser1091 and Ser1095 each carry the phosphoserine modification. Disordered stretches follow at residues 1124-1146 and 1152-1171; these read EIEA…SREL and RLEE…KKRE. The span at 1127 to 1146 shows a compositional bias: basic and acidic residues; that stretch reads AERASRAKAEKQRSDLSREL. 2 positions are modified to phosphoserine: Ser1161 and Ser1236. Phosphothreonine is present on Thr1240. Ser1242 bears the Phosphoserine mark. At Thr1254 the chain carries Phosphothreonine. Ser1260 carries the phosphoserine modification. Phosphothreonine is present on Thr1285. 3 positions are modified to phosphoserine: Ser1291, Ser1302, and Ser1305. Tyr1463 is subject to Phosphotyrosine. Thr1466 bears the Phosphothreonine mark. Ser1473 bears the Phosphoserine mark. Tyr1491 bears the Phosphotyrosine mark. Residue Ser1494 is modified to Phosphoserine. Thr1500 carries the phosphothreonine modification. Ser1513 is subject to Phosphoserine. Position 1516 is a phosphothreonine (Thr1516). A phosphoserine mark is found at Ser1541, Ser1553, Ser1573, Ser1713, and Ser1725. Phosphothreonine occurs at positions 1729 and 1735. Ser1738 is subject to Phosphoserine.

It belongs to the TRAFAC class myosin-kinesin ATPase superfamily. Myosin family. As to quaternary structure, muscle myosin is a hexameric protein that consists of 2 heavy chain subunits (MHC), 2 alkali light chain subunits (MLC) and 2 regulatory light chain subunits (MLC-2). Interacts with SLC26A5.

Its subcellular location is the cytoplasm. It localises to the myofibril. Functionally, required for normal hearing. It plays a role in cochlear amplification of auditory stimuli, likely through the positive regulation of prestin (SLC26A5) activity and outer hair cell (OHC) electromotility. The chain is Myosin-1 (MYH1) from Equus caballus (Horse).